The following is a 120-amino-acid chain: FK506-binding protein 1A (120 aa).

The region spanning 26–114 (GDNVDVHYKG…IFETELVGIK (89 aa)) is the PPIase FKBP-type domain.

The protein belongs to the FKBP-type PPIase family. FKBP1 subfamily.

It localises to the cytoplasm. The catalysed reaction is [protein]-peptidylproline (omega=180) = [protein]-peptidylproline (omega=0). Functionally, PPIases accelerate the folding of proteins. It catalyzes the cis-trans isomerization of proline imidic peptide bonds in oligopeptides. This is FK506-binding protein 1A (fkr-2) from Neurospora crassa (strain ATCC 24698 / 74-OR23-1A / CBS 708.71 / DSM 1257 / FGSC 987).